A 3587-amino-acid polypeptide reads, in one-letter code: Tyrocidine synthase 2 (3587 aa).

A domain 1 (Proline-activating) region spans residues 466-1045; it reads AATMHELFSR…IQALAAYVEG (580 aa). Carrier domains lie at 972–1047 and 2007–2082; these read APTT…EGGE and APAT…EHSE. O-(pantetheine 4'-phosphoryl)serine occurs at positions 1007 and 2042. The domain 2 (Phenylalanine-activating) stretch occupies residues 1522 to 2081; sequence EQTAVVFGDK…RDLARLIEHS (560 aa). Positions 2540–3122 are domain 3 (D-phenylalanine-activating); that stretch reads YRADQTIQQL…NSRESEQGVV (583 aa). The disordered stretch occupies residues 3017–3040; it reads NDKIDRKALPKPNQEENRTEQYAA. Basic and acidic residues predominate over residues 3018 to 3035; sequence DKIDRKALPKPNQEENRT. The Carrier 3 domain occupies 3040–3114; the sequence is APQTELEQLL…EAALRVIPNS (75 aa). O-(pantetheine 4'-phosphoryl)serine is present on Ser-3075.

The protein belongs to the ATP-dependent AMP-binding enzyme family. Large multienzyme complex of TycA, TycB and TycC. Requires pantetheine 4'-phosphate as cofactor.

It catalyses the reaction L-phenylalanine + ATP + H2O = D-phenylalanine + AMP + diphosphate + H(+). It participates in antibiotic biosynthesis; tyrocidine biosynthesis. Activates the second to fourth amino acids in tyrocidine (in tyrocidine A, Pro, Phe, and D-Phe) and epimerizes the last one. The protein is Tyrocidine synthase 2 (tycB) of Brevibacillus parabrevis.